A 505-amino-acid polypeptide reads, in one-letter code: Glycerol kinase (505 aa).

Threonine 14 is an ADP binding site. The ATP site is built by threonine 14, threonine 15, and serine 16. Threonine 14 is a binding site for sn-glycerol 3-phosphate. Arginine 18 is a binding site for ADP. Arginine 84, glutamate 85, tyrosine 136, and aspartate 246 together coordinate sn-glycerol 3-phosphate. Positions 84, 85, 136, 246, and 247 each coordinate glycerol. ADP-binding residues include threonine 268 and glycine 311. ATP contacts are provided by threonine 268, glycine 311, glutamine 315, and glycine 412. Positions 412 and 416 each coordinate ADP.

This sequence belongs to the FGGY kinase family.

It catalyses the reaction glycerol + ATP = sn-glycerol 3-phosphate + ADP + H(+). It functions in the pathway polyol metabolism; glycerol degradation via glycerol kinase pathway; sn-glycerol 3-phosphate from glycerol: step 1/1. Its activity is regulated as follows. Inhibited by fructose 1,6-bisphosphate (FBP). Its function is as follows. Key enzyme in the regulation of glycerol uptake and metabolism. Catalyzes the phosphorylation of glycerol to yield sn-glycerol 3-phosphate. This chain is Glycerol kinase, found in Vibrio parahaemolyticus serotype O3:K6 (strain RIMD 2210633).